Reading from the N-terminus, the 128-residue chain is MASEASVRLGVPPGRLWIQRPGIYEDEEGRTWVTVVVRFNPSRREWARASQGSRYEPSITVHLWQMAVHTRELLSSGQMPFSQLPAVWQLYPGRKYRAADSSFWEIADHGQIDSMEQLVLTYQPERKD.

This sequence belongs to the TCL1 family. As to quaternary structure, interacts with AKT1 and AKT2 (via PH domain). Does not interact with AKT3. Expressed in a variety of tissues including placenta and testis.

Enhances the phosphorylation and activation of AKT1 and AKT2. This Homo sapiens (Human) protein is T-cell leukemia/lymphoma protein 1B (TCL1B).